A 669-amino-acid polypeptide reads, in one-letter code: DNA mismatch repair protein MutL (669 aa).

The segment at 356 to 377 (FEQRQNTENNQEKTFSSEESNS) is disordered. The span at 361-377 (NTENNQEKTFSSEESNS) shows a compositional bias: polar residues.

The protein belongs to the DNA mismatch repair MutL/HexB family.

Functionally, this protein is involved in the repair of mismatches in DNA. It is required for dam-dependent methyl-directed DNA mismatch repair. May act as a 'molecular matchmaker', a protein that promotes the formation of a stable complex between two or more DNA-binding proteins in an ATP-dependent manner without itself being part of a final effector complex. In Staphylococcus aureus (strain MSSA476), this protein is DNA mismatch repair protein MutL.